A 419-amino-acid polypeptide reads, in one-letter code: Hyaluronan synthase (419 aa).

The next 5 membrane-spanning stretches (helical) occupy residues 8–28, 33–53, 318–338, 345–365, and 376–396; these read LIVL…MYLF, VGIY…LSFL, IVAL…VAIG, AIQL…IVAL, and PASF…LQPL.

The protein belongs to the NodC/HAS family. It depends on Mg(2+) as a cofactor.

It localises to the cell membrane. The enzyme catalyses [hyaluronan](n) + UDP-N-acetyl-alpha-D-glucosamine = N-acetyl-beta-D-glucosaminyl-(1-&gt;4)-[hyaluronan](n) + UDP + H(+). It catalyses the reaction N-acetyl-beta-D-glucosaminyl-(1-&gt;4)-[hyaluronan](n) + UDP-alpha-D-glucuronate = [hyaluronan](n+1) + UDP + H(+). It functions in the pathway glycan biosynthesis; hyaluronan biosynthesis. Functionally, glycosaminoglycan synthesis. The hyaluronic acid capsule is involved in the pathogenicity of group A Streptococci; it may be the major virulence determinant. In Streptococcus pyogenes serotype M18 (strain MGAS8232), this protein is Hyaluronan synthase (hasA).